The primary structure comprises 229 residues: Large ribosomal subunit protein uL1 (229 aa).

It belongs to the universal ribosomal protein uL1 family. In terms of assembly, part of the 50S ribosomal subunit.

In terms of biological role, binds directly to 23S rRNA. The L1 stalk is quite mobile in the ribosome, and is involved in E site tRNA release. Protein L1 is also a translational repressor protein, it controls the translation of the L11 operon by binding to its mRNA. The polypeptide is Large ribosomal subunit protein uL1 (Listeria innocua serovar 6a (strain ATCC BAA-680 / CLIP 11262)).